The following is a 263-amino-acid chain: 4-hydroxy-2-oxo-heptane-1,7-dioate aldolase (263 aa).

The active-site Proton acceptor is the H45. Q147 contacts substrate. E149 is an a divalent metal cation binding site. Substrate contacts are provided by A174 and D175. D175 lines the a divalent metal cation pocket.

It belongs to the HpcH/HpaI aldolase family. Homohexamer; trimer of dimers. The cofactor is a divalent metal cation.

It catalyses the reaction 4-hydroxy-2-oxoheptanedioate = succinate semialdehyde + pyruvate. The protein operates within aromatic compound metabolism; 4-hydroxyphenylacetate degradation; pyruvate and succinate semialdehyde from 4-hydroxyphenylacetate: step 7/7. In terms of biological role, catalyzes the reversible retro-aldol cleavage of 4-hydroxy-2-ketoheptane-1,7-dioate (HKHD) to pyruvate and succinic semialdehyde. This is 4-hydroxy-2-oxo-heptane-1,7-dioate aldolase from Salmonella choleraesuis (strain SC-B67).